Reading from the N-terminus, the 670-residue chain is tRNA 5-methylaminomethyl-2-thiouridine biosynthesis bifunctional protein MnmC (670 aa).

Residues 1-242 form a tRNA (mnm(5)s(2)U34)-methyltransferase region; the sequence is MTFSVQHAEI…KRECLSGLKI (242 aa). Residues 269–670 are FAD-dependent cmnm(5)s(2)U34 oxidoreductase; that stretch reads IGGGIASFCA…KKWLKGSKVE (402 aa).

In the N-terminal section; belongs to the methyltransferase superfamily. tRNA (mnm(5)s(2)U34)-methyltransferase family. This sequence in the C-terminal section; belongs to the DAO family. FAD serves as cofactor.

Its subcellular location is the cytoplasm. It carries out the reaction 5-aminomethyl-2-thiouridine(34) in tRNA + S-adenosyl-L-methionine = 5-methylaminomethyl-2-thiouridine(34) in tRNA + S-adenosyl-L-homocysteine + H(+). Catalyzes the last two steps in the biosynthesis of 5-methylaminomethyl-2-thiouridine (mnm(5)s(2)U) at the wobble position (U34) in tRNA. Catalyzes the FAD-dependent demodification of cmnm(5)s(2)U34 to nm(5)s(2)U34, followed by the transfer of a methyl group from S-adenosyl-L-methionine to nm(5)s(2)U34, to form mnm(5)s(2)U34. In Haemophilus influenzae (strain 86-028NP), this protein is tRNA 5-methylaminomethyl-2-thiouridine biosynthesis bifunctional protein MnmC.